A 146-amino-acid chain; its full sequence is Aspartate carbamoyltransferase regulatory chain (146 aa).

Zn(2+) is bound by residues Cys102, Cys107, Cys131, and Cys134.

Belongs to the PyrI family. Contains catalytic and regulatory chains. Zn(2+) is required as a cofactor.

Involved in allosteric regulation of aspartate carbamoyltransferase. This is Aspartate carbamoyltransferase regulatory chain from Clostridium botulinum (strain Okra / Type B1).